A 346-amino-acid polypeptide reads, in one-letter code: F(420)H(2) dehydrogenase subunit H (346 aa).

A run of 8 helical transmembrane segments spans residues 18-38 (GIVGLVLIGVIFMGAMGAVWL), 91-111 (IFMLGSVFLMLVALPVGAVFI), 125-145 (ISVLYIEAVSALSIFGIFMVA), 170-190 (PLGITVISVAAMTGSLNIVDI), 196-216 (LHWNIFLQPLGCFVFFVSLMA), 257-277 (ILGSFLVALLFLGGWNVPGFI), 284-304 (GIIVPTGFLIVKVVFVLMVII), and 326-346 (LLPLALLNLVWAVGLGLYLGA).

It belongs to the complex I subunit 1 family. The FPO complex is composed of at least 13 different subunits. FpoA, FpoH, FpoJ, FpoK, FpoL, FpoM and FpoN proteins constitute the membrane sector of the complex.

It is found in the cell membrane. The catalysed reaction is methanophenazine + reduced coenzyme F420-(gamma-L-Glu)(n) = dihydromethanophenazine + oxidized coenzyme F420-(gamma-L-Glu)(n) + H(+). Component of the F(420)H(2) dehydrogenase (FPO complex) which is part of the energy-conserving F(420)H(2):heterodisulfide oxidoreductase system. The membrane-bound electron transfer system of the complex plays an important role in the metabolism of methylotrophic methanogens when the organisms grow on methanol or methylamines. Catalyzes the oxidation of methanophenazine to dihydromethanophenazine. It shuttles electrons from F(420)H(2), via FAD and iron-sulfur (Fe-S) centers, to methanophenazine (an electron carrier in the membrane). It couples the redox reaction to proton translocation (for every two electrons transferred, two hydrogen ions are translocated across the cytoplasmic membrane), and thus conserves the redox energy in a proton gradient. The protein is F(420)H(2) dehydrogenase subunit H of Methanosarcina barkeri (strain Fusaro / DSM 804).